The chain runs to 344 residues: MEAARPFAREWRAQSLPLAVGGVLKLRLCELWLLLLGSSLNARFLPDEEDVDFINEYVNLHNELRGDVIPRGSNLRFMTWDVALSRTARAWGKKCLFTHNIYLQDVQMVHPKFYGIGENMWVGPENEFTASIAIRSWHAEKKMYNFENGSCSGDCSNYIQLVWDHSYKVGCAVTPCSKIGHIIHAAIFICNYAPGGTLTRRPYEPGIFCTRCGRRDKCTDFLCSNADRDQATYYRFWYPKWEMPRPVVCDPLCTFILLLRILCFILCVITVLIVQSQFPNILLEQQMIFTPEESEAGNEEEEKEEEKKEKEEMEMEIMEMEEEKEEREEEEEETQKEKMEEEEK.

An SCP domain is found at 58 to 192 (VNLHNELRGD…IHAAIFICNY (135 aa)). The chain crosses the membrane as a helical span at residues 254-274 (TFILLLRILCFILCVITVLIV). Composition is skewed to acidic residues over residues 292 to 304 (EESEAGNEEEEKE) and 312 to 334 (EMEMEIMEMEEEKEEREEEEEET). Residues 292-344 (EESEAGNEEEEKEEEKKEKEEMEMEIMEMEEEKEEREEEEEETQKEKMEEEEK) form a disordered region. The segment covering 335-344 (QKEKMEEEEK) has biased composition (basic and acidic residues).

The protein belongs to the CRISP family. In terms of tissue distribution, highly expressed in testis. Detected in prostate, kidney, bladder, lung and bone marrow.

Its subcellular location is the membrane. The sequence is that of GLIPR1-like protein 2 (GLIPR1L2) from Homo sapiens (Human).